We begin with the raw amino-acid sequence, 143 residues long: Ribonuclease HI (143 aa).

The region spanning 1 to 136 (MQEIEIFCDG…CNSLAKLEAQ (136 aa)) is the RNase H type-1 domain. Asp9, Glu47, Asp69, and Asn128 together coordinate Mg(2+).

The protein belongs to the RNase H family. As to quaternary structure, monomer. Requires Mg(2+) as cofactor.

The protein localises to the cytoplasm. The catalysed reaction is Endonucleolytic cleavage to 5'-phosphomonoester.. In terms of biological role, endonuclease that specifically degrades the RNA of RNA-DNA hybrids. The sequence is that of Ribonuclease HI (rnhA) from Helicobacter pylori (strain J99 / ATCC 700824) (Campylobacter pylori J99).